Consider the following 229-residue polypeptide: 3,4-dihydroxy-2-butanone 4-phosphate synthase (229 aa).

D-ribulose 5-phosphate is bound by residues 28–29, Asp33, 164–168, and Glu188; these read RE and RGGHT. Glu29 provides a ligand contact to Mg(2+). His167 contributes to the Mg(2+) binding site.

This sequence belongs to the DHBP synthase family. In terms of assembly, homodimer. Mg(2+) serves as cofactor. It depends on Mn(2+) as a cofactor.

The enzyme catalyses D-ribulose 5-phosphate = (2S)-2-hydroxy-3-oxobutyl phosphate + formate + H(+). It participates in cofactor biosynthesis; riboflavin biosynthesis; 2-hydroxy-3-oxobutyl phosphate from D-ribulose 5-phosphate: step 1/1. Catalyzes the conversion of D-ribulose 5-phosphate to formate and 3,4-dihydroxy-2-butanone 4-phosphate. The polypeptide is 3,4-dihydroxy-2-butanone 4-phosphate synthase (Methanothermobacter thermautotrophicus (strain ATCC 29096 / DSM 1053 / JCM 10044 / NBRC 100330 / Delta H) (Methanobacterium thermoautotrophicum)).